Reading from the N-terminus, the 165-residue chain is ATP synthase subunit b (165 aa).

The helical transmembrane segment at 11-31 (LIFWTIVNFLLLVFLLGKFAW) threads the bilayer.

Belongs to the ATPase B chain family. In terms of assembly, F-type ATPases have 2 components, F(1) - the catalytic core - and F(0) - the membrane proton channel. F(1) has five subunits: alpha(3), beta(3), gamma(1), delta(1), epsilon(1). F(0) has three main subunits: a(1), b(2) and c(10-14). The alpha and beta chains form an alternating ring which encloses part of the gamma chain. F(1) is attached to F(0) by a central stalk formed by the gamma and epsilon chains, while a peripheral stalk is formed by the delta and b chains.

Its subcellular location is the cell membrane. Functionally, f(1)F(0) ATP synthase produces ATP from ADP in the presence of a proton or sodium gradient. F-type ATPases consist of two structural domains, F(1) containing the extramembraneous catalytic core and F(0) containing the membrane proton channel, linked together by a central stalk and a peripheral stalk. During catalysis, ATP synthesis in the catalytic domain of F(1) is coupled via a rotary mechanism of the central stalk subunits to proton translocation. Its function is as follows. Component of the F(0) channel, it forms part of the peripheral stalk, linking F(1) to F(0). The polypeptide is ATP synthase subunit b (Elusimicrobium minutum (strain Pei191)).